Reading from the N-terminus, the 788-residue chain is Probable potassium transporter 9 (788 aa).

At 1–21 (MDPEFGRGMAPRKREPWRTTL) the chain is on the cytoplasmic side. The chain crosses the membrane as a helical span at residues 22–42 (LLAYQSLGVVYGDLSISPLYV). The Extracellular portion of the chain corresponds to 43-59 (YKSTFAEDITHSESNEE). A helical transmembrane segment spans residues 60–80 (IFGVLSFVFWTLTLIPLIKYV). Topologically, residues 81 to 151 (SIVLRADDNG…EKHKTLQTAL (71 aa)) are cytoplasmic. A helical membrane pass occupies residues 152 to 172 (LIMVMIGTCMVIGDGVLTPAI). Over 173 to 191 (SVFSAVSGLELSLSRDQHE) the chain is Extracellular. Residues 192–212 (YAVIPITCVILVFLFALQHYG) form a helical membrane-spanning segment. Over 213-215 (THR) the chain is Cytoplasmic. A helical membrane pass occupies residues 216-236 (VGFLFAPIVLAWLICMSMLGL). Residues 237–264 (YNIIHWNPQVYRALNPYYMLKFLRKTKK) are Extracellular-facing. The helical transmembrane segment at 265–285 (SGWMSLGGILLCMTGSEAMFA) threads the bilayer. The Cytoplasmic segment spans residues 286-292 (DLGHFSY). The helical transmembrane segment at 293 to 313 (SAIQLAFTTLVYPALILGYMG) threads the bilayer. Residues 314–343 (QAAYLSKHHTLNSTYQIGYYISVPESVRWP) are Extracellular-facing. An N-linked (GlcNAc...) asparagine glycan is attached at Asn325. Residues 344–364 (VLVLAILASVVGSQAIISGTF) traverse the membrane as a helical segment. The Cytoplasmic portion of the chain corresponds to 365–391 (SIINQSQSLSCFPRVKVVHTSENIHGQ). A helical membrane pass occupies residues 392–412 (IYIPEINWLLMVLCIAVTVGF). The Extracellular portion of the chain corresponds to 413–422 (RDTKHMGNAS). Asn420 carries N-linked (GlcNAc...) asparagine glycosylation. The helical transmembrane segment at 423–443 (GLAVITVMLVTTCLTSLVIML) threads the bilayer. At 444–451 (CWHRSPAL) the chain is on the cytoplasmic side. A helical membrane pass occupies residues 452–472 (ALVFFLFFGSIEVLYFSASLI). Residues 473 to 476 (KFRE) are Extracellular-facing. A helical transmembrane segment spans residues 477-497 (GAWLPIMLALILMAVMFIWHH). The Cytoplasmic portion of the chain corresponds to 498–788 (TTIKKYEFDL…LLEVGMVYVL (291 aa)).

The protein belongs to the HAK/KUP transporter (TC 2.A.72.3) family.

The protein localises to the membrane. In terms of biological role, high-affinity potassium transporter. The chain is Probable potassium transporter 9 (HAK9) from Oryza sativa subsp. japonica (Rice).